The chain runs to 521 residues: Probable feruloyl esterase B-2 (521 aa).

An N-terminal signal peptide occupies residues 1-19; that stretch reads MKVSLWLTLLGVNLSLALA. Residues Asn13, Asn53, Asn85, Asn98, and Asn138 are each glycosylated (N-linked (GlcNAc...) asparagine). 2 disulfide bridges follow: Cys28–Cys75 and Cys63–Cys114. Cystine bridges form between Cys187/Cys440, Cys257/Cys274, Cys283/Cys291, and Cys506/Cys520. The active-site Acyl-ester intermediate is the Ser188. A glycan (N-linked (GlcNAc...) asparagine) is linked at Asn235. 5 residues coordinate Ca(2+): Asp258, Asp261, Val263, Asp265, and Ile267. The active-site Charge relay system is Asp399. Asn419 carries an N-linked (GlcNAc...) asparagine glycan. Catalysis depends on His439, which acts as the Charge relay system.

This sequence belongs to the tannase family.

Its subcellular location is the secreted. It catalyses the reaction feruloyl-polysaccharide + H2O = ferulate + polysaccharide.. In terms of biological role, involved in degradation of plant cell walls. Hydrolyzes the feruloyl-arabinose ester bond in arabinoxylans as well as the feruloyl-galactose and feruloyl-arabinose ester bonds in pectin. In Aspergillus flavus (strain ATCC 200026 / FGSC A1120 / IAM 13836 / NRRL 3357 / JCM 12722 / SRRC 167), this protein is Probable feruloyl esterase B-2 (faeB-2).